A 73-amino-acid chain; its full sequence is Disintegrin barbourin (73 aa).

Positions 1-73 constitute a Disintegrin domain; sequence EAGEECDCGS…ADCPRNGLYG (73 aa). Intrachain disulfides connect Cys6/Cys21, Cys8/Cys16, Cys15/Cys38, Cys29/Cys35, Cys34/Cys59, and Cys47/Cys66. The short motif at 51 to 53 is the Cell attachment site; atypical (KGD) element; that stretch reads KGD.

Belongs to the venom metalloproteinase (M12B) family. P-II subfamily. P-IIa sub-subfamily. Monomer. As to expression, expressed by the venom gland.

The protein resides in the secreted. Functionally, inhibitor of ligand binding to the integrins alpha-IIb/beta-3 (ITGA2B/ITGB3). Competition with fibrinogen for the RGD recognition sites on the alpha-IIb/beta-3 integrin results in the inhibition of platelet aggregation induced by ADP, thrombin, platelet-activating factor and collagen. The protein is Disintegrin barbourin of Sistrurus miliarius barbouri (Dusky pigmy rattlesnake).